A 153-amino-acid polypeptide reads, in one-letter code: Ribosomal RNA large subunit methyltransferase H (153 aa).

S-adenosyl-L-methionine contacts are provided by residues L63, G102, and 121–126; that span reads FGKITL.

It belongs to the RNA methyltransferase RlmH family. Homodimer.

The protein localises to the cytoplasm. It catalyses the reaction pseudouridine(1915) in 23S rRNA + S-adenosyl-L-methionine = N(3)-methylpseudouridine(1915) in 23S rRNA + S-adenosyl-L-homocysteine + H(+). Its function is as follows. Specifically methylates the pseudouridine at position 1915 (m3Psi1915) in 23S rRNA. The polypeptide is Ribosomal RNA large subunit methyltransferase H (Sulfurovum sp. (strain NBC37-1)).